Here is a 201-residue protein sequence, read N- to C-terminus: Probable quinol oxidase subunit 3 (201 aa).

The next 5 helical transmembrane spans lie at 20 to 40, 62 to 82, 91 to 111, 133 to 153, and 172 to 192; these read LGFW…FATL, LVLI…ISIY, LMMF…GFEI, FFIL…WIIC, and FIVS…FTAV.

Belongs to the cytochrome c oxidase subunit 3 family.

Its subcellular location is the cell membrane. It carries out the reaction 2 a quinol + O2 = 2 a quinone + 2 H2O. Functionally, catalyzes quinol oxidation with the concomitant reduction of oxygen to water. The polypeptide is Probable quinol oxidase subunit 3 (qoxC) (Staphylococcus haemolyticus (strain JCSC1435)).